The following is a 300-amino-acid chain: tRNA dimethylallyltransferase (300 aa).

11 to 18 (GPTAVGKS) provides a ligand contact to ATP. 13 to 18 (TAVGKS) is a substrate binding site. The interval 35–38 (DSIQ) is interaction with substrate tRNA.

The protein belongs to the IPP transferase family. As to quaternary structure, monomer. Requires Mg(2+) as cofactor.

The catalysed reaction is adenosine(37) in tRNA + dimethylallyl diphosphate = N(6)-dimethylallyladenosine(37) in tRNA + diphosphate. In terms of biological role, catalyzes the transfer of a dimethylallyl group onto the adenine at position 37 in tRNAs that read codons beginning with uridine, leading to the formation of N6-(dimethylallyl)adenosine (i(6)A). The sequence is that of tRNA dimethylallyltransferase from Borrelia duttonii (strain Ly).